The following is a 228-amino-acid chain: UPF0173 metal-dependent hydrolase BLi03080/BL00413 (228 aa).

Belongs to the UPF0173 family.

This Bacillus licheniformis (strain ATCC 14580 / DSM 13 / JCM 2505 / CCUG 7422 / NBRC 12200 / NCIMB 9375 / NCTC 10341 / NRRL NRS-1264 / Gibson 46) protein is UPF0173 metal-dependent hydrolase BLi03080/BL00413.